The following is a 282-amino-acid chain: MNVCKLKEIVPLFPRSSFTDGVVSTGKSFRSWDTCMDNKACKIIAIVGIVLACILVIWLIGGLLTCFRQGVTGIGQFICWCCRCSNDRNGNNTMPVNEGFSRVNMGVAPPSTVIYQPIQQPESAYYRNDAKNDTFYDEVKTPSNEVYELEEDFDLEKQKEKTRKKQQKERNKEGRSPSRVAPLVYEEENFEGSSPQPQYDARNSFIQNAANTGSNNAHVASQSPIFDISDYGENYYYDNNNINNNLQGNSYNTPSSNHRSPYPTENYQSYQGYKPNQSDRYY.

Residues 43–63 (IIAIVGIVLACILVIWLIGGL) form a helical membrane-spanning segment. N-linked (GlcNAc...) asparagine glycosylation is found at Asn91 and Asn132. Thr141 carries the post-translational modification Phosphothreonine. Disordered stretches follow at residues 153–183 (FDLE…VAPL) and 246–282 (LQGN…DRYY). The segment covering 253-282 (TPSSNHRSPYPTENYQSYQGYKPNQSDRYY) has biased composition (polar residues). A glycan (N-linked (GlcNAc...) asparagine) is linked at Asn276.

Its subcellular location is the membrane. Functionally, not known. Seems to be able to provoque the non-Mendelian trait [PIN(+)] which is required for the de novo appearance of the [PSI(+)] prion. This Saccharomyces cerevisiae (strain ATCC 204508 / S288c) (Baker's yeast) protein is [PSI+] induction protein 2 (PIN2).